Here is a 309-residue protein sequence, read N- to C-terminus: Solute carrier family 25 member 48 (309 aa).

Solcar repeat units follow at residues 3 to 86 (VFQL…TQRL), 99 to 209 (CSML…FCNW), and 218 to 305 (PPPC…SLQF). 6 helical membrane-spanning segments follow: residues 9-29 (FLAG…LDTV), 61-81 (GLSF…GFFS), 105-125 (TVAS…VDLV), 186-206 (GAMI…YTLF), 218-238 (PPPC…WVTA), and 281-299 (ATVN…FLGY).

Belongs to the mitochondrial carrier (TC 2.A.29) family.

It localises to the mitochondrion inner membrane. The chain is Solute carrier family 25 member 48 (slc25a48) from Danio rerio (Zebrafish).